Consider the following 611-residue polypeptide: Dihydroxy-acid dehydratase (611 aa).

Position 81 (D81) interacts with Mg(2+). Residue C122 coordinates [2Fe-2S] cluster. D123 and K124 together coordinate Mg(2+). Residue K124 is modified to N6-carboxylysine. Position 195 (C195) interacts with [2Fe-2S] cluster. E491 serves as a coordination point for Mg(2+). The active-site Proton acceptor is the S517.

This sequence belongs to the IlvD/Edd family. As to quaternary structure, homodimer. [2Fe-2S] cluster is required as a cofactor. Mg(2+) serves as cofactor.

The catalysed reaction is (2R)-2,3-dihydroxy-3-methylbutanoate = 3-methyl-2-oxobutanoate + H2O. It catalyses the reaction (2R,3R)-2,3-dihydroxy-3-methylpentanoate = (S)-3-methyl-2-oxopentanoate + H2O. Its pathway is amino-acid biosynthesis; L-isoleucine biosynthesis; L-isoleucine from 2-oxobutanoate: step 3/4. The protein operates within amino-acid biosynthesis; L-valine biosynthesis; L-valine from pyruvate: step 3/4. In terms of biological role, functions in the biosynthesis of branched-chain amino acids. Catalyzes the dehydration of (2R,3R)-2,3-dihydroxy-3-methylpentanoate (2,3-dihydroxy-3-methylvalerate) into 2-oxo-3-methylpentanoate (2-oxo-3-methylvalerate) and of (2R)-2,3-dihydroxy-3-methylbutanoate (2,3-dihydroxyisovalerate) into 2-oxo-3-methylbutanoate (2-oxoisovalerate), the penultimate precursor to L-isoleucine and L-valine, respectively. The protein is Dihydroxy-acid dehydratase of Brucella canis (strain ATCC 23365 / NCTC 10854 / RM-666).